The chain runs to 264 residues: Ribosomal protein L11 methyltransferase (264 aa).

S-adenosyl-L-methionine contacts are provided by threonine 116, glycine 137, aspartate 159, and asparagine 200.

The protein belongs to the methyltransferase superfamily. PrmA family.

Its subcellular location is the cytoplasm. The catalysed reaction is L-lysyl-[protein] + 3 S-adenosyl-L-methionine = N(6),N(6),N(6)-trimethyl-L-lysyl-[protein] + 3 S-adenosyl-L-homocysteine + 3 H(+). Its function is as follows. Methylates ribosomal protein L11. This Thermotoga maritima (strain ATCC 43589 / DSM 3109 / JCM 10099 / NBRC 100826 / MSB8) protein is Ribosomal protein L11 methyltransferase.